A 372-amino-acid chain; its full sequence is Alanine dehydrogenase 1 (372 aa).

Residue H94 is part of the active site. 170–200 (TYVIFGGGVAATNAANVALGLNAKVIIIELN) is an NAD(+) binding site.

It belongs to the AlaDH/PNT family.

It carries out the reaction L-alanine + NAD(+) + H2O = pyruvate + NH4(+) + NADH + H(+). It participates in amino-acid degradation; L-alanine degradation via dehydrogenase pathway; NH(3) and pyruvate from L-alanine: step 1/1. Functionally, may play a role in cell wall synthesis as L-alanine is an important constituent of the peptidoglycan layer. In Staphylococcus aureus (strain USA300), this protein is Alanine dehydrogenase 1 (ald1).